The sequence spans 317 residues: MTDKLTSLRQFTTVVADTGDIAAMKLYQPQDATTNPSLILNAAQIPEYRKLIDDAVAWAKQQSSDRAQQVVDATDKLAVNIGLEILKLVPGRISTEVDARLSYDTEASIAKAKRIIKLYNDAGISNDRILIKLASTWQGIRAAEQLEKEGINCNLTLLFSFAQARACAEAGVYLISPFVGRILDWYKANTDKKDYAPAEDPGVVSVTEIYEYYKQHGYETVVMGASFRNVGEILELAGCDRLTIAPALLKELAESEGAIERKLSFSGEVKARPERITEAEFLWQHHQDPMAVDKLADGIRKFAVDQEKLEKMIGDLL.

Catalysis depends on K132, which acts as the Schiff-base intermediate with substrate.

The protein belongs to the transaldolase family. Type 1 subfamily. Homodimer.

The protein localises to the cytoplasm. The catalysed reaction is D-sedoheptulose 7-phosphate + D-glyceraldehyde 3-phosphate = D-erythrose 4-phosphate + beta-D-fructose 6-phosphate. Its pathway is carbohydrate degradation; pentose phosphate pathway; D-glyceraldehyde 3-phosphate and beta-D-fructose 6-phosphate from D-ribose 5-phosphate and D-xylulose 5-phosphate (non-oxidative stage): step 2/3. Transaldolase is important for the balance of metabolites in the pentose-phosphate pathway. This Salmonella paratyphi A (strain ATCC 9150 / SARB42) protein is Transaldolase 1.